A 267-amino-acid polypeptide reads, in one-letter code: Large ribosomal subunit protein uL4 (267 aa).

This sequence belongs to the universal ribosomal protein uL4 family. As to quaternary structure, part of the 50S ribosomal subunit.

One of the primary rRNA binding proteins, this protein initially binds near the 5'-end of the 23S rRNA. It is important during the early stages of 50S assembly. It makes multiple contacts with different domains of the 23S rRNA in the assembled 50S subunit and ribosome. Its function is as follows. Forms part of the polypeptide exit tunnel. The polypeptide is Large ribosomal subunit protein uL4 (Saccharolobus islandicus (strain M.16.27) (Sulfolobus islandicus)).